We begin with the raw amino-acid sequence, 279 residues long: Fatty acid metabolism regulator protein (279 aa).

The region spanning 6–74 (KSPAGFAEKY…HGKPTKVNQF (69 aa)) is the HTH gntR-type domain. The segment at residues 34–53 (ERELSELIGVTRTTLREVLQ) is a DNA-binding region (H-T-H motif).

As to quaternary structure, homodimer.

The protein localises to the cytoplasm. Functionally, multifunctional regulator of fatty acid metabolism. The polypeptide is Fatty acid metabolism regulator protein (Vibrio cholerae serotype O1 (strain ATCC 39541 / Classical Ogawa 395 / O395)).